Here is a 204-residue protein sequence, read N- to C-terminus: Protein GrpE (204 aa).

Residues 1–55 (MSSKNNPESETKAKNKWEKVMEAEEEQEEGRGDGSQEMEPHREGLEFPSREKLEG) form a disordered region. Basic and acidic residues-rich tracts occupy residues 7-22 (PESE…KVME) and 29-55 (EGRG…KLEG).

Belongs to the GrpE family. As to quaternary structure, homodimer.

The protein resides in the cytoplasm. Its function is as follows. Participates actively in the response to hyperosmotic and heat shock by preventing the aggregation of stress-denatured proteins, in association with DnaK and GrpE. It is the nucleotide exchange factor for DnaK and may function as a thermosensor. Unfolded proteins bind initially to DnaJ; upon interaction with the DnaJ-bound protein, DnaK hydrolyzes its bound ATP, resulting in the formation of a stable complex. GrpE releases ADP from DnaK; ATP binding to DnaK triggers the release of the substrate protein, thus completing the reaction cycle. Several rounds of ATP-dependent interactions between DnaJ, DnaK and GrpE are required for fully efficient folding. This Coxiella burnetii (strain RSA 331 / Henzerling II) protein is Protein GrpE.